The chain runs to 312 residues: Ribose-phosphate pyrophosphokinase (312 aa).

Residues 34 to 36 and 93 to 94 each bind ATP; these read DLE and RQ. Residues histidine 127 and aspartate 168 each coordinate Mg(2+). Lysine 192 is a catalytic residue. D-ribose 5-phosphate-binding positions include arginine 194, aspartate 218, and 222 to 226; that span reads DSAGT.

This sequence belongs to the ribose-phosphate pyrophosphokinase family. Class I subfamily. Homohexamer. The cofactor is Mg(2+).

The protein localises to the cytoplasm. The enzyme catalyses D-ribose 5-phosphate + ATP = 5-phospho-alpha-D-ribose 1-diphosphate + AMP + H(+). The protein operates within metabolic intermediate biosynthesis; 5-phospho-alpha-D-ribose 1-diphosphate biosynthesis; 5-phospho-alpha-D-ribose 1-diphosphate from D-ribose 5-phosphate (route I): step 1/1. In terms of biological role, involved in the biosynthesis of the central metabolite phospho-alpha-D-ribosyl-1-pyrophosphate (PRPP) via the transfer of pyrophosphoryl group from ATP to 1-hydroxyl of ribose-5-phosphate (Rib-5-P). In Caulobacter vibrioides (strain ATCC 19089 / CIP 103742 / CB 15) (Caulobacter crescentus), this protein is Ribose-phosphate pyrophosphokinase.